The sequence spans 354 residues: Chorismate synthase (354 aa).

Arg48 contributes to the NADP(+) binding site. FMN-binding positions include 126 to 128 (RAS), Ala278, 293 to 297 (KPIPS), and Arg319.

The protein belongs to the chorismate synthase family. Homotetramer. It depends on FMNH2 as a cofactor.

The catalysed reaction is 5-O-(1-carboxyvinyl)-3-phosphoshikimate = chorismate + phosphate. It participates in metabolic intermediate biosynthesis; chorismate biosynthesis; chorismate from D-erythrose 4-phosphate and phosphoenolpyruvate: step 7/7. Functionally, catalyzes the anti-1,4-elimination of the C-3 phosphate and the C-6 proR hydrogen from 5-enolpyruvylshikimate-3-phosphate (EPSP) to yield chorismate, which is the branch point compound that serves as the starting substrate for the three terminal pathways of aromatic amino acid biosynthesis. This reaction introduces a second double bond into the aromatic ring system. The chain is Chorismate synthase from Desulfosudis oleivorans (strain DSM 6200 / JCM 39069 / Hxd3) (Desulfococcus oleovorans).